The following is a 257-amino-acid chain: Hydroxyethylthiazole kinase (257 aa).

M42 is a substrate binding site. ATP-binding residues include R117 and T163. Position 190 (A190) interacts with substrate.

The protein belongs to the Thz kinase family. Mg(2+) serves as cofactor.

The enzyme catalyses 5-(2-hydroxyethyl)-4-methylthiazole + ATP = 4-methyl-5-(2-phosphooxyethyl)-thiazole + ADP + H(+). It functions in the pathway cofactor biosynthesis; thiamine diphosphate biosynthesis; 4-methyl-5-(2-phosphoethyl)-thiazole from 5-(2-hydroxyethyl)-4-methylthiazole: step 1/1. Its function is as follows. Catalyzes the phosphorylation of the hydroxyl group of 4-methyl-5-beta-hydroxyethylthiazole (THZ). The sequence is that of Hydroxyethylthiazole kinase from Roseobacter denitrificans (strain ATCC 33942 / OCh 114) (Erythrobacter sp. (strain OCh 114)).